We begin with the raw amino-acid sequence, 684 residues long: Divalent metal transporter 1 (684 aa).

Over 1–228 the chain is Cytoplasmic; sequence MEKDFTERST…YRNKLSLYNK (228 aa). Residues 153–195 are disordered; the sequence is NKRNNNNNNNNNNNNNNNNNNNNNNNNNNNNNNNNSNNVDNRK. The segment covering 156 to 191 has biased composition (low complexity); it reads NNNNNNNNNNNNNNNNNNNNNNNNNNNNNNNNSNNV. The chain crosses the membrane as a helical span at residues 229–247; it reads LRMCFNYFGPGWIVAIAYL. Residues 248–275 lie on the Vacuolar side of the membrane; that stretch reads DPGNLCSNLNVGLIRSPDPTLEKDYSGY. A helical transmembrane segment spans residues 276-299; the sequence is YLLWIMVYGHMLGFIFQVLSMRLG. The Cytoplasmic portion of the chain corresponds to 300-319; the sequence is HVTGLDLASLCSKEFDRTTS. The helical transmembrane segment at 320–345 threads the bilayer; the sequence is TIIYVLVQIAIWGAHIQAIIGTFIAL. The Vacuolar segment spans residues 346–350; that stretch reads NLIFG. A helical transmembrane segment spans residues 351–370; that stretch reads ISVKVAIFYTLFEAIIYSFL. The Cytoplasmic portion of the chain corresponds to 371-381; it reads ENKSLGLLENV. Residues 382–404 form a helical membrane-spanning segment; sequence LSFLVGILAVSFFVNVFMTPINF. Over 405–423 the chain is Vacuolar; that stretch reads KELAISILYPRIPKGKEID. The chain crosses the membrane as a helical span at residues 424-445; sequence ALALLGSIISAHIFYLHTNLTA. The Cytoplasmic segment spans residues 446–465; sequence KKKSVICNDLSLRRYNTLGT. The helical transmembrane segment at 466-487 threads the bilayer; it reads IESGGSLFLSCLTNCIIVLTFA. The Vacuolar segment spans residues 488 to 515; sequence EVNLKSFERRDQYNLFTAYEVMRKSFGK. Residues 516–534 traverse the membrane as a helical segment; that stretch reads ISMYIWSFGLLSSGNNSSF. Residues 535 to 554 are Cytoplasmic-facing; it reads MCEYASKSVVEGFLNKKINT. A helical transmembrane segment spans residues 555-573; sequence FVRVFTFRLMLFSLLYMFL. The Vacuolar segment spans residues 574–584; sequence TLNKYTLDQLT. The chain crosses the membrane as a helical span at residues 585–603; the sequence is NFINVIQVLLLPMATIPLY. At 604–622 the chain is on the cytoplasmic side; the sequence is RFSIHENVLGEFRLKKFPK. Residues 623–645 traverse the membrane as a helical segment; sequence FAVFLIIIAIIISNVLLTFLDFV. At 646–650 the chain is on the vacuolar side; the sequence is HKETS. The chain crosses the membrane as a helical span at residues 651–673; the sequence is LITIFFLVIFSFLYFGFIIYFFN. Residues 674 to 684 lie on the Cytoplasmic side of the membrane; sequence IPIKKNYIQRN.

It belongs to the NRAMP (TC 2.A.55) family.

Its subcellular location is the vacuole membrane. It carries out the reaction Fe(2+)(in) = Fe(2+)(out). Functionally, iron transporter. Required for parasite development during the blood stages. Required for apicoplast biogenesis. Required for mitochondrial polarization. The protein is Divalent metal transporter 1 of Plasmodium falciparum (isolate 3D7).